The following is an 83-amino-acid chain: Major outer membrane lipoprotein (83 aa).

Residues 1–19 (MNNVLKFSALALAAVLATG) form the signal peptide. C20 carries the N-palmitoyl cysteine lipid modification. C20 carries S-diacylglycerol cysteine lipidation.

The protein localises to the cell outer membrane. In Pseudomonas aeruginosa (strain ATCC 15692 / DSM 22644 / CIP 104116 / JCM 14847 / LMG 12228 / 1C / PRS 101 / PAO1), this protein is Major outer membrane lipoprotein (oprI).